Reading from the N-terminus, the 393-residue chain is MAKEAYKRDKPHVNIGTIGHVDHGKTTLTAAITSVLAKAGNAEMREFGDIDKAPEERERGITISTAHVEYQTEKRHYAHIDCPGHADYIKNMITGAAQMDGAILVVAGTDGPMPQTREHILLARQVNVPALVVFLNKVDIADPELLELVELELRELLTEYDFPGDDIPIIKGSALKALEGDAEAEKAIMELMDAVDDYIPEPVRDVDKPFLMPVEDVFSISGRGTVGTGRIERGVVKINEEVELVGIKPTKKTVVTGIEMFQKILDQGQAGDNAGLLFRGVGKDEIERGMVVAKPGTITPHTKFKAEVYILKKEEGGRHTPFFNNYRPQFYFRTTDVTGAVTLPEGVEMVMPGDNLSIEVELIVPIAMDENLRFAIREGGRTVGAGTVTQIIE.

Positions 10-203 (KPHVNIGTIG…AVDDYIPEPV (194 aa)) constitute a tr-type G domain. Positions 19–26 (GHVDHGKT) are G1. A GTP-binding site is contributed by 19–26 (GHVDHGKT). Thr-26 is a binding site for Mg(2+). The G2 stretch occupies residues 60-64 (GITIS). The interval 81–84 (DCPG) is G3. GTP is bound by residues 81 to 85 (DCPGH) and 136 to 139 (NKVD). Residues 136 to 139 (NKVD) are G4. The G5 stretch occupies residues 173–175 (SAL).

It belongs to the TRAFAC class translation factor GTPase superfamily. Classic translation factor GTPase family. EF-Tu/EF-1A subfamily. Monomer.

The protein resides in the cytoplasm. The enzyme catalyses GTP + H2O = GDP + phosphate + H(+). Functionally, GTP hydrolase that promotes the GTP-dependent binding of aminoacyl-tRNA to the A-site of ribosomes during protein biosynthesis. This chain is Elongation factor Tu, found in Chlorobium phaeobacteroides (strain BS1).